The primary structure comprises 368 residues: Phosphate acyltransferase (368 aa).

Positions 334–368 (EGSLEQAARDASGAGHASPIAGQPAEPYAAQSSKA) are disordered.

It belongs to the PlsX family. In terms of assembly, homodimer. Probably interacts with PlsY.

The protein resides in the cytoplasm. The enzyme catalyses a fatty acyl-[ACP] + phosphate = an acyl phosphate + holo-[ACP]. It participates in lipid metabolism; phospholipid metabolism. Functionally, catalyzes the reversible formation of acyl-phosphate (acyl-PO(4)) from acyl-[acyl-carrier-protein] (acyl-ACP). This enzyme utilizes acyl-ACP as fatty acyl donor, but not acyl-CoA. In Paraburkholderia xenovorans (strain LB400), this protein is Phosphate acyltransferase.